A 607-amino-acid chain; its full sequence is Elongation factor 4 (607 aa).

In terms of domain architecture, tr-type G spans Ser11–Thr193. GTP is bound by residues Asp23–Thr28 and Asn140–Asp143.

This sequence belongs to the TRAFAC class translation factor GTPase superfamily. Classic translation factor GTPase family. LepA subfamily.

It is found in the cell membrane. The enzyme catalyses GTP + H2O = GDP + phosphate + H(+). Functionally, required for accurate and efficient protein synthesis under certain stress conditions. May act as a fidelity factor of the translation reaction, by catalyzing a one-codon backward translocation of tRNAs on improperly translocated ribosomes. Back-translocation proceeds from a post-translocation (POST) complex to a pre-translocation (PRE) complex, thus giving elongation factor G a second chance to translocate the tRNAs correctly. Binds to ribosomes in a GTP-dependent manner. In Bacillus mycoides (strain KBAB4) (Bacillus weihenstephanensis), this protein is Elongation factor 4.